The chain runs to 122 residues: Large ribosomal subunit protein uL14 (122 aa).

The protein belongs to the universal ribosomal protein uL14 family. In terms of assembly, part of the 50S ribosomal subunit. Forms a cluster with proteins L3 and L19. In the 70S ribosome, L14 and L19 interact and together make contacts with the 16S rRNA in bridges B5 and B8.

Functionally, binds to 23S rRNA. Forms part of two intersubunit bridges in the 70S ribosome. The polypeptide is Large ribosomal subunit protein uL14 (Limosilactobacillus reuteri (strain DSM 20016) (Lactobacillus reuteri)).